The primary structure comprises 316 residues: Acetyl-coenzyme A carboxylase carboxyl transferase subunit beta (316 aa).

Positions 39–308 (LWHKCSKCGV…TPPMVLWETM (270 aa)) constitute a CoA carboxyltransferase N-terminal domain. Positions 43, 46, 62, and 65 each coordinate Zn(2+). The C4-type zinc finger occupies 43 to 65 (CSKCGVLTYTKDLRANQMVCVEC).

This sequence belongs to the AccD/PCCB family. As to quaternary structure, acetyl-CoA carboxylase is a heterohexamer composed of biotin carboxyl carrier protein (AccB), biotin carboxylase (AccC) and two subunits each of ACCase subunit alpha (AccA) and ACCase subunit beta (AccD). The cofactor is Zn(2+).

Its subcellular location is the cytoplasm. The enzyme catalyses N(6)-carboxybiotinyl-L-lysyl-[protein] + acetyl-CoA = N(6)-biotinyl-L-lysyl-[protein] + malonyl-CoA. The protein operates within lipid metabolism; malonyl-CoA biosynthesis; malonyl-CoA from acetyl-CoA: step 1/1. Functionally, component of the acetyl coenzyme A carboxylase (ACC) complex. Biotin carboxylase (BC) catalyzes the carboxylation of biotin on its carrier protein (BCCP) and then the CO(2) group is transferred by the transcarboxylase to acetyl-CoA to form malonyl-CoA. In Nostoc sp. (strain PCC 7120 / SAG 25.82 / UTEX 2576), this protein is Acetyl-coenzyme A carboxylase carboxyl transferase subunit beta.